Reading from the N-terminus, the 987-residue chain is AP3-complex subunit beta-A (987 aa).

Positions 586–662 are disordered; it reads QDQLSDLDKQ…ISETSVSADQ (77 aa). A compositionally biased stretch (acidic residues) spans 603–613; the sequence is DGSEESSETGD. Low complexity predominate over residues 614-631; the sequence is ENGSSDYDSESSNGSDFS.

This sequence belongs to the adaptor complexes large subunit family. As to quaternary structure, adaptor protein complex 3 (AP-3) is a heterotetramer composed of two large adaptins (delta-type subunit and beta-type subunit), a medium adaptin (mu-type subunit) and a small adaptin (sigma-type subunit).

It is found in the cytoplasm. Its subcellular location is the golgi apparatus. It localises to the cytoplasmic vesicle membrane. In terms of biological role, part of the AP-3 complex, an adaptor-related complex which seems to be clathrin-associated. The complex is associated with the Golgi region as well as more peripheral structures. It facilitates the budding of vesicles from the Golgi membrane and may be directly involved in trafficking to the vacuole. It also function in maintaining the identity of lytic vacuoles and in regulating the transition between storage and lytic vacuoles. The chain is AP3-complex subunit beta-A (AP3BA) from Arabidopsis thaliana (Mouse-ear cress).